The chain runs to 235 residues: tRNA pseudouridine synthase B (235 aa).

Aspartate 45 functions as the Nucleophile in the catalytic mechanism.

Belongs to the pseudouridine synthase TruB family. Type 1 subfamily.

The enzyme catalyses uridine(55) in tRNA = pseudouridine(55) in tRNA. Its function is as follows. Responsible for synthesis of pseudouridine from uracil-55 in the psi GC loop of transfer RNAs. The protein is tRNA pseudouridine synthase B of Chlamydia felis (strain Fe/C-56) (Chlamydophila felis).